The primary structure comprises 201 residues: Recombination protein RecR (201 aa).

A C4-type zinc finger spans residues 57-72; it reads CRYCRNLSDAEVCLLC. Positions 80 to 175 constitute a Toprim domain; that stretch reads QQICVVETPA…QATRLAYGVP (96 aa).

It belongs to the RecR family.

Functionally, may play a role in DNA repair. It seems to be involved in an RecBC-independent recombinational process of DNA repair. It may act with RecF and RecO. This is Recombination protein RecR from Dichelobacter nodosus (strain VCS1703A).